The primary structure comprises 220 residues: LOB domain-containing protein 31 (220 aa).

In terms of domain architecture, LOB spans 10-112; it reads GPCGACKFLR…AELAYVQTQL (103 aa). Positions 117–172 are disordered; the sequence is GLPPPNSQNNSRTEAASSSNVPLISSVDSKDNMSSSSSHIPCMSQQQEQEQPKEAI. Positions 123 to 139 are enriched in polar residues; that stretch reads SQNNSRTEAASSSNVPL.

It belongs to the LOB domain-containing protein family. As to expression, expressed in roots, stems and flowers.

The protein is LOB domain-containing protein 31 (LBD31) of Arabidopsis thaliana (Mouse-ear cress).